A 164-amino-acid chain; its full sequence is Crossover junction endodeoxyribonuclease RuvC (164 aa).

Catalysis depends on residues Asp7, Glu67, and Asp140. The Mg(2+) site is built by Asp7, Glu67, and Asp140.

This sequence belongs to the RuvC family. As to quaternary structure, homodimer which binds Holliday junction (HJ) DNA. The HJ becomes 2-fold symmetrical on binding to RuvC with unstacked arms; it has a different conformation from HJ DNA in complex with RuvA. In the full resolvosome a probable DNA-RuvA(4)-RuvB(12)-RuvC(2) complex forms which resolves the HJ. Mg(2+) serves as cofactor.

It is found in the cytoplasm. The enzyme catalyses Endonucleolytic cleavage at a junction such as a reciprocal single-stranded crossover between two homologous DNA duplexes (Holliday junction).. In terms of biological role, the RuvA-RuvB-RuvC complex processes Holliday junction (HJ) DNA during genetic recombination and DNA repair. Endonuclease that resolves HJ intermediates. Cleaves cruciform DNA by making single-stranded nicks across the HJ at symmetrical positions within the homologous arms, yielding a 5'-phosphate and a 3'-hydroxyl group; requires a central core of homology in the junction. The consensus cleavage sequence is 5'-(A/T)TT(C/G)-3'. Cleavage occurs on the 3'-side of the TT dinucleotide at the point of strand exchange. HJ branch migration catalyzed by RuvA-RuvB allows RuvC to scan DNA until it finds its consensus sequence, where it cleaves and resolves the cruciform DNA. The polypeptide is Crossover junction endodeoxyribonuclease RuvC (Pelotomaculum thermopropionicum (strain DSM 13744 / JCM 10971 / SI)).